The primary structure comprises 357 residues: Probable cinnamyl alcohol dehydrogenase 2 (357 aa).

C47 lines the Zn(2+) pocket. S49 contacts NADP(+). H69, E70, C100, C103, C106, C114, and C163 together coordinate Zn(2+). NADP(+) contacts are provided by residues T167, G188 to G193, S211 to K216, T251, G275, and S298 to I300.

Belongs to the zinc-containing alcohol dehydrogenase family. In terms of assembly, homodimer. Zn(2+) serves as cofactor. Post-translationally, the N-terminus is blocked.

It carries out the reaction (E)-cinnamyl alcohol + NADP(+) = (E)-cinnamaldehyde + NADPH + H(+). It catalyses the reaction (E)-coniferol + NADP(+) = (E)-coniferaldehyde + NADPH + H(+). The enzyme catalyses (E)-sinapyl alcohol + NADP(+) = (E)-sinapaldehyde + NADPH + H(+). The catalysed reaction is (E)-4-coumaroyl alcohol + NADP(+) = (E)-4-coumaraldehyde + NADPH + H(+). It carries out the reaction (E)-caffeyl alcohol + NADP(+) = (E)-caffeyl aldehyde + NADPH + H(+). It participates in aromatic compound metabolism; phenylpropanoid biosynthesis. Its function is as follows. Involved in lignin biosynthesis. Catalyzes the final step specific for the production of lignin monomers. Catalyzes the NADPH-dependent reduction of coniferaldehyde, 5-hydroxyconiferaldehyde, sinapaldehyde, 4-coumaraldehyde and caffeyl aldehyde to their respective alcohols. The chain is Probable cinnamyl alcohol dehydrogenase 2 (CAD19) from Nicotiana tabacum (Common tobacco).